Here is a 615-residue protein sequence, read N- to C-terminus: Chaperone protein HscA homolog (615 aa).

The protein belongs to the heat shock protein 70 family.

Chaperone involved in the maturation of iron-sulfur cluster-containing proteins. Has a low intrinsic ATPase activity which is markedly stimulated by HscB. The protein is Chaperone protein HscA homolog of Aeromonas salmonicida (strain A449).